Reading from the N-terminus, the 297-residue chain is Tumor necrosis factor receptor superfamily member 27 (297 aa).

Residues 1–138 (MDCQENEYRD…AHTVPPREAT (138 aa)) lie on the Extracellular side of the membrane. TNFR-Cys repeat units follow at residues 2-41 (DCQE…DAHC), 43-83 (VCPP…NAIC), and 85-118 (DCLP…EVQC). Disulfide bonds link C3/C15, C18/C31, C21/C41, C44/C58, C61/C75, C64/C83, C86/C104, and C107/C118. N-linked (GlcNAc...) asparagine glycans are attached at residues N74 and N77. The helical; Signal-anchor for type III membrane protein transmembrane segment at 139–159 (LVALVGSLLVVFALAFLGLFF) threads the bilayer. Over 160–297 (LYCKQIFNRH…LYVPFEVPSL (138 aa)) the chain is Cytoplasmic.

In terms of assembly, associates with TRAF1, TRAF3 and TRAF6.

It localises to the membrane. In terms of biological role, receptor for EDA isoform A2, but not for EDA isoform A1. Mediates the activation of the NF-kappa-B and JNK pathways. Activation seems to be mediated by binding to TRAF3 and TRAF6. The chain is Tumor necrosis factor receptor superfamily member 27 (Eda2r) from Mus musculus (Mouse).